The chain runs to 469 residues: Ribulose bisphosphate carboxylase large chain (469 aa).

2 residues coordinate substrate: asparagine 115 and threonine 165. Residue lysine 167 is the Proton acceptor of the active site. Lysine 169 lines the substrate pocket. Positions 193, 195, and 196 each coordinate Mg(2+). Lysine 193 is subject to N6-carboxylysine. Histidine 286 (proton acceptor) is an active-site residue. Residues arginine 287, histidine 319, and serine 371 each contribute to the substrate site.

It belongs to the RuBisCO large chain family. Type I subfamily. Heterohexadecamer of 8 large chains and 8 small chains. Mg(2+) is required as a cofactor.

It is found in the plastid. The protein resides in the organellar chromatophore. It carries out the reaction 2 (2R)-3-phosphoglycerate + 2 H(+) = D-ribulose 1,5-bisphosphate + CO2 + H2O. The catalysed reaction is D-ribulose 1,5-bisphosphate + O2 = 2-phosphoglycolate + (2R)-3-phosphoglycerate + 2 H(+). Its function is as follows. RuBisCO catalyzes two reactions: the carboxylation of D-ribulose 1,5-bisphosphate, the primary event in carbon dioxide fixation, as well as the oxidative fragmentation of the pentose substrate. Both reactions occur simultaneously and in competition at the same active site. The protein is Ribulose bisphosphate carboxylase large chain of Paulinella chromatophora.